We begin with the raw amino-acid sequence, 623 residues long: Chaperone protein HtpG (623 aa).

Residues 1–336 (MVSKQQTMGF…ASDLPLNISR (336 aa)) are a; substrate-binding. A b region spans residues 337–550 (EILQDNKQVE…EQDMGLEMQR (214 aa)). Positions 551–623 (ILQAAGQQVP…NRVNRLLVSS (73 aa)) are c.

This sequence belongs to the heat shock protein 90 family. Homodimer.

It is found in the cytoplasm. In terms of biological role, molecular chaperone. Has ATPase activity. In Legionella pneumophila (strain Paris), this protein is Chaperone protein HtpG.